We begin with the raw amino-acid sequence, 217 residues long: 3-demethoxyubiquinol 3-hydroxylase (217 aa).

Fe cation contacts are provided by E66, E96, H99, E148, E180, and H183.

The protein belongs to the COQ7 family. The cofactor is Fe cation.

It localises to the cell membrane. The enzyme catalyses a 5-methoxy-2-methyl-3-(all-trans-polyprenyl)benzene-1,4-diol + AH2 + O2 = a 3-demethylubiquinol + A + H2O. The protein operates within cofactor biosynthesis; ubiquinone biosynthesis. Its function is as follows. Catalyzes the hydroxylation of 2-nonaprenyl-3-methyl-6-methoxy-1,4-benzoquinol during ubiquinone biosynthesis. This is 3-demethoxyubiquinol 3-hydroxylase from Xylella fastidiosa (strain 9a5c).